The sequence spans 668 residues: DNA ligase (668 aa).

Residues 37–41 (DNVYD), 86–87 (SM), and Glu116 each bind NAD(+). Residue Lys118 is the N6-AMP-lysine intermediate of the active site. Positions 139, 173, 288, and 312 each coordinate NAD(+). Residues Cys406, Cys409, Cys424, and Cys429 each contribute to the Zn(2+) site. The BRCT domain maps to 591-668 (IPDNPFKDKT…TEEEAIAQIK (78 aa)).

Belongs to the NAD-dependent DNA ligase family. LigA subfamily. Requires Mg(2+) as cofactor. Mn(2+) is required as a cofactor.

It catalyses the reaction NAD(+) + (deoxyribonucleotide)n-3'-hydroxyl + 5'-phospho-(deoxyribonucleotide)m = (deoxyribonucleotide)n+m + AMP + beta-nicotinamide D-nucleotide.. Its function is as follows. DNA ligase that catalyzes the formation of phosphodiester linkages between 5'-phosphoryl and 3'-hydroxyl groups in double-stranded DNA using NAD as a coenzyme and as the energy source for the reaction. It is essential for DNA replication and repair of damaged DNA. The sequence is that of DNA ligase from Lactobacillus acidophilus (strain ATCC 700396 / NCK56 / N2 / NCFM).